Consider the following 873-residue polypeptide: Cyanophycin synthetase (873 aa).

Residues 224–480 enclose the ATP-grasp domain; the sequence is KTILQDAGIP…VAAPVLDMLF (257 aa). Residue 495 to 501 coordinates ATP; it reads GTNGKTT.

In the C-terminal section; belongs to the MurCDEF family. Homodimer.

It catalyses the reaction [L-4-(L-arginin-2-N-yl)aspartate](n) + L-aspartate + ATP = [L-4-(L-arginin-2-N-yl)aspartate](n)-L-aspartate + ADP + phosphate + H(+). The catalysed reaction is [L-4-(L-arginin-2-N-yl)aspartate](n)-L-aspartate + L-arginine + ATP = [L-4-(L-arginin-2-N-yl)aspartate](n+1) + ADP + phosphate + H(+). Its function is as follows. Catalyzes the ATP-dependent polymerization of arginine and aspartate to multi-L-arginyl-poly-L-aspartic acid (cyanophycin; a water-insoluble reserve polymer). This is Cyanophycin synthetase (cphA) from Synechocystis sp. (strain ATCC 27184 / PCC 6803 / Kazusa).